The chain runs to 118 residues: Protein TusC (118 aa).

It belongs to the DsrF/TusC family. As to quaternary structure, heterohexamer, formed by a dimer of trimers. The hexameric TusBCD complex contains 2 copies each of TusB, TusC and TusD. The TusBCD complex interacts with TusE.

The protein localises to the cytoplasm. Functionally, part of a sulfur-relay system required for 2-thiolation of 5-methylaminomethyl-2-thiouridine (mnm(5)s(2)U) at tRNA wobble positions. The sequence is that of Protein TusC from Salmonella arizonae (strain ATCC BAA-731 / CDC346-86 / RSK2980).